We begin with the raw amino-acid sequence, 103 residues long: Large ribosomal subunit protein uL24 (103 aa).

Belongs to the universal ribosomal protein uL24 family. In terms of assembly, part of the 50S ribosomal subunit.

Its function is as follows. One of two assembly initiator proteins, it binds directly to the 5'-end of the 23S rRNA, where it nucleates assembly of the 50S subunit. In terms of biological role, one of the proteins that surrounds the polypeptide exit tunnel on the outside of the subunit. In Glaesserella parasuis serovar 5 (strain SH0165) (Haemophilus parasuis), this protein is Large ribosomal subunit protein uL24.